Here is a 166-residue protein sequence, read N- to C-terminus: Putative 4-hydroxy-4-methyl-2-oxoglutarate aldolase (166 aa).

Residues Gly-74–Ile-77 and Arg-96 each bind substrate. Asp-97 serves as a coordination point for a divalent metal cation.

Belongs to the class II aldolase/RraA-like family. As to quaternary structure, homotrimer. The cofactor is a divalent metal cation.

It carries out the reaction 4-hydroxy-4-methyl-2-oxoglutarate = 2 pyruvate. It catalyses the reaction oxaloacetate + H(+) = pyruvate + CO2. Functionally, catalyzes the aldol cleavage of 4-hydroxy-4-methyl-2-oxoglutarate (HMG) into 2 molecules of pyruvate. Also contains a secondary oxaloacetate (OAA) decarboxylase activity due to the common pyruvate enolate transition state formed following C-C bond cleavage in the retro-aldol and decarboxylation reactions. This is Putative 4-hydroxy-4-methyl-2-oxoglutarate aldolase from Xanthomonas axonopodis pv. citri (strain 306).